A 277-amino-acid chain; its full sequence is Ribosomal RNA small subunit methyltransferase A (277 aa).

Positions 18, 20, 45, 66, 89, and 110 each coordinate S-adenosyl-L-methionine.

The protein belongs to the class I-like SAM-binding methyltransferase superfamily. rRNA adenine N(6)-methyltransferase family. RsmA subfamily.

The protein resides in the cytoplasm. The catalysed reaction is adenosine(1518)/adenosine(1519) in 16S rRNA + 4 S-adenosyl-L-methionine = N(6)-dimethyladenosine(1518)/N(6)-dimethyladenosine(1519) in 16S rRNA + 4 S-adenosyl-L-homocysteine + 4 H(+). Its function is as follows. Specifically dimethylates two adjacent adenosines (A1518 and A1519) in the loop of a conserved hairpin near the 3'-end of 16S rRNA in the 30S particle. May play a critical role in biogenesis of 30S subunits. This chain is Ribosomal RNA small subunit methyltransferase A, found in Cupriavidus taiwanensis (strain DSM 17343 / BCRC 17206 / CCUG 44338 / CIP 107171 / LMG 19424 / R1) (Ralstonia taiwanensis (strain LMG 19424)).